A 505-amino-acid chain; its full sequence is Glutamate--tRNA ligase (505 aa).

The 'HIGH' region motif lies at 12–22; it reads PSPTGDPHVGT. The 'KMSKS' region motif lies at 253–257; the sequence is KLSKR. ATP is bound at residue lysine 256.

This sequence belongs to the class-I aminoacyl-tRNA synthetase family. Glutamate--tRNA ligase type 1 subfamily. Monomer.

Its subcellular location is the cytoplasm. The catalysed reaction is tRNA(Glu) + L-glutamate + ATP = L-glutamyl-tRNA(Glu) + AMP + diphosphate. Functionally, catalyzes the attachment of glutamate to tRNA(Glu) in a two-step reaction: glutamate is first activated by ATP to form Glu-AMP and then transferred to the acceptor end of tRNA(Glu). This Chlamydia felis (strain Fe/C-56) (Chlamydophila felis) protein is Glutamate--tRNA ligase.